Here is a 279-residue protein sequence, read N- to C-terminus: Four and a half LIM domains protein 2 (279 aa).

The C4-type zinc finger occupies 7 to 31; sequence CHHCEDSLFGRKYVLREEQPYCVAC. 3 LIM zinc-binding domains span residues 40 to 92, 101 to 153, and 162 to 212; these read CEEC…CTDC, CQEC…CVPC, and CVQC…CLGC. Lysine 78 participates in a covalent cross-link: Glycyl lysine isopeptide (Lys-Gly) (interchain with G-Cter in SUMO2). Residues lysine 167 and lysine 220 each participate in a glycyl lysine isopeptide (Lys-Gly) (interchain with G-Cter in SUMO2) cross-link. The region spanning 221 to 275 is the LIM zinc-binding 4 domain; the sequence is CAGCANPISGLGGTKYISFEERQWHNDCFNCKKCSLSLVGRGFLTERDDILCPDC. Serine 238 is subject to Phosphoserine.

Interacts with ZNF638 and TTN/titin. Interacts with E4F1. Interacts with GRB7. Interacts with SIRT1 and FOXO1. Interacts with CEFIP and calcineurin. Interacts with FOXK1.

It is found in the cytoplasm. The protein localises to the nucleus. Its subcellular location is the myofibril. It localises to the sarcomere. The protein resides in the z line. Functionally, may function as a molecular transmitter linking various signaling pathways to transcriptional regulation. Negatively regulates the transcriptional repressor E4F1 and may function in cell growth. Inhibits the transcriptional activity of FOXO1 and its apoptotic function by enhancing the interaction of FOXO1 with SIRT1 and FOXO1 deacetylation. Negatively regulates the calcineurin/NFAT signaling pathway in cardiomyocytes. The protein is Four and a half LIM domains protein 2 (FHL2) of Bos taurus (Bovine).